A 188-amino-acid polypeptide reads, in one-letter code: Adenine phosphoribosyltransferase (188 aa).

This sequence belongs to the purine/pyrimidine phosphoribosyltransferase family. As to quaternary structure, homodimer.

Its subcellular location is the cytoplasm. The enzyme catalyses AMP + diphosphate = 5-phospho-alpha-D-ribose 1-diphosphate + adenine. It participates in purine metabolism; AMP biosynthesis via salvage pathway; AMP from adenine: step 1/1. Functionally, catalyzes a salvage reaction resulting in the formation of AMP, that is energically less costly than de novo synthesis. The polypeptide is Adenine phosphoribosyltransferase (Burkholderia ambifaria (strain MC40-6)).